Consider the following 263-residue polypeptide: Hemin import ATP-binding protein HmuV (263 aa).

One can recognise an ABC transporter domain in the interval 2 to 242 (IEARDVSVDI…DLIEKVFDCR (241 aa)). Residue 34 to 41 (GPNGSGKT) participates in ATP binding.

Belongs to the ABC transporter superfamily. Heme (hemin) importer (TC 3.A.1.14.5) family. As to quaternary structure, the complex is composed of two ATP-binding proteins (HmuV), two transmembrane proteins (HmuU) and a solute-binding protein (HmuT).

It localises to the cell inner membrane. Its function is as follows. Part of the ABC transporter complex HmuTUV involved in hemin import. Responsible for energy coupling to the transport system. This is Hemin import ATP-binding protein HmuV from Mesorhizobium japonicum (strain LMG 29417 / CECT 9101 / MAFF 303099) (Mesorhizobium loti (strain MAFF 303099)).